Consider the following 169-residue polypeptide: Probable phospholipid hydroperoxide glutathione peroxidase (169 aa).

Cys-43 is a catalytic residue.

Belongs to the glutathione peroxidase family. Germinating seed, apex, flower, as well as in stressed tissues.

Its subcellular location is the cytoplasm. It catalyses the reaction a hydroperoxy polyunsaturated fatty acid + 2 glutathione = a hydroxy polyunsaturated fatty acid + glutathione disulfide + H2O. In terms of biological role, protects cells and enzymes from oxidative damage, by catalyzing the reduction of hydrogen peroxide, lipid peroxides and organic hydroperoxide, by glutathione. In Nicotiana sylvestris (Wood tobacco), this protein is Probable phospholipid hydroperoxide glutathione peroxidase.